The following is a 181-amino-acid chain: tRNA (cytidine(56)-2'-O)-methyltransferase (181 aa).

S-adenosyl-L-methionine-binding positions include Leu-88, 115 to 119 (GGEKV), and 133 to 140 (IGNQPHSE).

It belongs to the aTrm56 family. As to quaternary structure, homodimer.

The protein localises to the cytoplasm. It carries out the reaction cytidine(56) in tRNA + S-adenosyl-L-methionine = 2'-O-methylcytidine(56) in tRNA + S-adenosyl-L-homocysteine + H(+). Its function is as follows. Specifically catalyzes the AdoMet-dependent 2'-O-ribose methylation of cytidine at position 56 in tRNAs. The protein is tRNA (cytidine(56)-2'-O)-methyltransferase of Thermofilum pendens (strain DSM 2475 / Hrk 5).